A 277-amino-acid chain; its full sequence is Large ribosomal subunit protein uL2 (277 aa).

Disordered stretches follow at residues 32–58 (KSLT…RGGG) and 225–277 (VAMN…RRNN).

The protein belongs to the universal ribosomal protein uL2 family. Part of the 50S ribosomal subunit. Forms a bridge to the 30S subunit in the 70S ribosome.

Functionally, one of the primary rRNA binding proteins. Required for association of the 30S and 50S subunits to form the 70S ribosome, for tRNA binding and peptide bond formation. It has been suggested to have peptidyltransferase activity; this is somewhat controversial. Makes several contacts with the 16S rRNA in the 70S ribosome. This chain is Large ribosomal subunit protein uL2, found in Borrelia duttonii (strain Ly).